The following is a 75-amino-acid chain: Small ribosomal subunit protein bS18 (75 aa).

This sequence belongs to the bacterial ribosomal protein bS18 family. Part of the 30S ribosomal subunit. Forms a tight heterodimer with protein bS6.

Binds as a heterodimer with protein bS6 to the central domain of the 16S rRNA, where it helps stabilize the platform of the 30S subunit. In Saccharophagus degradans (strain 2-40 / ATCC 43961 / DSM 17024), this protein is Small ribosomal subunit protein bS18.